The sequence spans 70 residues: Large ribosomal subunit protein bL31 (70 aa).

It belongs to the bacterial ribosomal protein bL31 family. Type A subfamily. As to quaternary structure, part of the 50S ribosomal subunit.

Binds the 23S rRNA. The protein is Large ribosomal subunit protein bL31 of Chlorobium chlorochromatii (strain CaD3).